Here is a 201-residue protein sequence, read N- to C-terminus: NADH-quinone oxidoreductase subunit C (201 aa).

This sequence belongs to the complex I 30 kDa subunit family. NDH-1 is composed of 14 different subunits. Subunits NuoB, C, D, E, F, and G constitute the peripheral sector of the complex.

Its subcellular location is the cell inner membrane. The catalysed reaction is a quinone + NADH + 5 H(+)(in) = a quinol + NAD(+) + 4 H(+)(out). NDH-1 shuttles electrons from NADH, via FMN and iron-sulfur (Fe-S) centers, to quinones in the respiratory chain. The immediate electron acceptor for the enzyme in this species is believed to be ubiquinone. Couples the redox reaction to proton translocation (for every two electrons transferred, four hydrogen ions are translocated across the cytoplasmic membrane), and thus conserves the redox energy in a proton gradient. The sequence is that of NADH-quinone oxidoreductase subunit C from Azoarcus sp. (strain BH72).